We begin with the raw amino-acid sequence, 266 residues long: UPF0294 protein YafD (266 aa).

The protein belongs to the UPF0294 family.

Its subcellular location is the cytoplasm. The sequence is that of UPF0294 protein YafD from Salmonella paratyphi C (strain RKS4594).